The chain runs to 366 residues: Arfaptin-1 (366 aa).

The segment at 1 to 78 (MAEESPKNSA…SSAPPLPCVL (78 aa)) is disordered. Ala2 bears the N-acetylalanine mark. Residue Ser5 is modified to Phosphoserine. Residues 22 to 35 (GDAHEHGYNRDLKH) show a composition bias toward basic and acidic residues. Ser36 and Ser39 each carry phosphoserine. Residues 44 to 53 (SETQITSHGF) show a composition bias toward polar residues. Phosphoserine is present on residues Ser69, Ser79, and Ser125. Residues 146–346 (TVDLELEAQI…NQKQLEQTLK (201 aa)) form the AH domain. Thr354 is subject to Phosphothreonine.

In terms of assembly, forms homodimers or heterodimers with ARFIP2. Interacts with non-myristoylated GTP-bound ARF3, but not to GDP-bound ARF3. Interacts with ARF1. Binds with lower affinity to ARF5 and with very little affinity to ARF6. Interacts with ARL1. Interacts with ATG9A.

The protein resides in the golgi apparatus. It localises to the trans-Golgi network membrane. In terms of biological role, plays a role in controlling biogenesis of secretory granules at the trans-Golgi network. Mechanistically, binds ARF-GTP at the neck of a growing secretory granule precursor and forms a protective scaffold. Once the granule precursor has been completely loaded, active PRKD1 phosphorylates ARFIP1 and releases it from ARFs. In turn, ARFs induce fission. Through this mechanism, ensures proper secretory granule formation at the Golgi of pancreatic beta cells. The chain is Arfaptin-1 from Rattus norvegicus (Rat).